The primary structure comprises 585 residues: MSHDNKPTDSNPAASNFLRSIIDQDLAAGTYAGRQDKQGEPLPTVITRFPPEPNGYLHIGHAKSICLNFGLARDYGGRCHLRFDDTNPVKEDTEYVESIIDAVHWLGFSWDSEGKDGQKQPHLYYASDYFDQLYAFAETLIERGAAYVDSQSAEQIAASRGNFSEPGKPSPFRDRSVEENLQLFRDMRAGKYADGEHVLRAKIDMAAPNIVMRDPVLYRIRHAHHHRTGDKWCIYPMYDFTHCISDALENITHSLCTLEFENNRPLYDWVLEHLRDSGVFRDPLPHQYEFARLNLTYAITSKRKLKQLVDEQRVDGWDDPRMPTLVGVRRRGYTPESIQLFCDRVGVAKADSWIDMSTLEGSVRDDLDGRAARGVAVLDPLKLIIDNYPEGQSEECSAPVHPKKPELGKRVFPLSRELWIEREDFNETPPKGYFRLFPGNKVRLKYGYVIECTGVDKDADGNVIAVHASYLPDTKSGTPGADSVKVKGVIHWVSAAHAYEAEVRLYDRLFNDPNPDAGGKNFLDALNPDSKQVITAYLEPGLREAQPEDRFQFERHGYFVADRSDSTPGKPVFNRIVGLKDSWGK.

A 'HIGH' region motif is present at residues 51–61; it reads PEPNGYLHIGH. Residues 52-54 and 58-64 each bind ATP; these read EPN and HIGHAKS. D84 and Y238 together coordinate L-glutamine. ATP is bound by residues T257 and 292–293; that span reads RL. The 'KMSKS' region signature appears at 299 to 303; it reads ITSKR.

The protein belongs to the class-I aminoacyl-tRNA synthetase family. As to quaternary structure, monomer.

Its subcellular location is the cytoplasm. The catalysed reaction is tRNA(Gln) + L-glutamine + ATP = L-glutaminyl-tRNA(Gln) + AMP + diphosphate. This Cupriavidus taiwanensis (strain DSM 17343 / BCRC 17206 / CCUG 44338 / CIP 107171 / LMG 19424 / R1) (Ralstonia taiwanensis (strain LMG 19424)) protein is Glutamine--tRNA ligase.